Here is a 450-residue protein sequence, read N- to C-terminus: Methylenetetrahydrofolate--tRNA-(uracil-5-)-methyltransferase TrmFO (450 aa).

Position 9 to 14 (G9 to G14) interacts with FAD.

Belongs to the MnmG family. TrmFO subfamily. FAD serves as cofactor.

It is found in the cytoplasm. The enzyme catalyses uridine(54) in tRNA + (6R)-5,10-methylene-5,6,7,8-tetrahydrofolate + NADH + H(+) = 5-methyluridine(54) in tRNA + (6S)-5,6,7,8-tetrahydrofolate + NAD(+). The catalysed reaction is uridine(54) in tRNA + (6R)-5,10-methylene-5,6,7,8-tetrahydrofolate + NADPH + H(+) = 5-methyluridine(54) in tRNA + (6S)-5,6,7,8-tetrahydrofolate + NADP(+). In terms of biological role, catalyzes the folate-dependent formation of 5-methyl-uridine at position 54 (M-5-U54) in all tRNAs. The sequence is that of Methylenetetrahydrofolate--tRNA-(uracil-5-)-methyltransferase TrmFO from Roseobacter denitrificans (strain ATCC 33942 / OCh 114) (Erythrobacter sp. (strain OCh 114)).